Here is a 153-residue protein sequence, read N- to C-terminus: Aspartate carbamoyltransferase regulatory chain (153 aa).

Zn(2+) contacts are provided by C109, C114, C138, and C141.

The protein belongs to the PyrI family. In terms of assembly, contains catalytic and regulatory chains. It depends on Zn(2+) as a cofactor.

Involved in allosteric regulation of aspartate carbamoyltransferase. This Cenarchaeum symbiosum (strain A) protein is Aspartate carbamoyltransferase regulatory chain.